Consider the following 342-residue polypeptide: tRNA-specific 2-thiouridylase MnmA 2 (342 aa).

The active-site Nucleophile is the Cys62. Cysteines 62 and 160 form a disulfide. Gly86 contributes to the ATP binding site. The segment at 110 to 112 is interaction with tRNA; that stretch reads KDQ. Cys160 serves as the catalytic Cysteine persulfide intermediate. The tract at residues 268 to 269 is interaction with tRNA; sequence RY.

This sequence belongs to the MnmA/TRMU family.

Its subcellular location is the cytoplasm. It carries out the reaction S-sulfanyl-L-cysteinyl-[protein] + uridine(34) in tRNA + AH2 + ATP = 2-thiouridine(34) in tRNA + L-cysteinyl-[protein] + A + AMP + diphosphate + H(+). Functionally, catalyzes the 2-thiolation of uridine at the wobble position (U34) of tRNA, leading to the formation of s(2)U34. The protein is tRNA-specific 2-thiouridylase MnmA 2 of Syntrophus aciditrophicus (strain SB).